Here is a 687-residue protein sequence, read N- to C-terminus: Protein white (687 aa).

The segment at 1-30 (MGQEDQELLIRGGSKHPSAEHLNNGDSGAA) is disordered. Residues 1 to 419 (MGQEDQELLI…FMQFRAVLWR (419 aa)) lie on the Cytoplasmic side of the membrane. Residues 93–341 (NRTRGLFCNE…FSYVGAQCPT (249 aa)) form the ABC transporter domain. Residue 130 to 137 (GSSGAGKT) participates in ATP binding. A helical transmembrane segment spans residues 420 to 440 (SWLSVLKEPLLVKVRLIQTTM). The Extracellular segment spans residues 441-460 (VAILIGLIFLGQQLTQVGVM). The helical transmembrane segment at 461–481 (NINGAIFLFLTNMTFQNVFAT) threads the bilayer. The Cytoplasmic portion of the chain corresponds to 482–497 (INVFTSELPVFMREAR). Residues 498-518 (SRLYRCDTYFLGKTIAELPLF) form a helical membrane-spanning segment. Topologically, residues 519 to 531 (LTVPLVFTAIAYP) are extracellular. Residues 532 to 552 (MIGLRAGVLHFFNCLALVTLV) traverse the membrane as a helical segment. The Cytoplasmic portion of the chain corresponds to 553–568 (ANVSTSFGYLISCASS). A helical membrane pass occupies residues 569–589 (STSMALSVGPPVIIPFLLFGG). Topologically, residues 590–644 (FFLNSGSVPVYLKWLSYLSWFRYANEGLLINQWADVEPGEISCTSSNTTCPSSGK) are extracellular. A glycan (N-linked (GlcNAc...) asparagine) is linked at N636. Residues 645-665 (VILETLNFSAADLPLDYVGLA) form a helical membrane-spanning segment. Topologically, residues 666 to 675 (ILIVSFRVLA) are cytoplasmic.

It belongs to the ABC transporter superfamily. ABCG family. Eye pigment precursor importer (TC 3.A.1.204) subfamily. As to quaternary structure, may form a heterodimer with bw/brown. May form a heterodimer with st/scarlet. In terms of tissue distribution, expressed in the head (at protein level). Expressed in the eye, specifically in retina primary pigment cells, in the basement membrane of the base of secondary and tertiary pigment cells, and in retinula cells (at protein level). Expressed in the retina underlying lamina in the epithelial glia that surrounds the array of lamina cartridges (at protein level). Weakly expressed in photoreceptors, specifically in terminals of R1-R6, R7 and R8 (at protein level). Expressed at very low levels in medulla and central brain (at protein level). Expressed in principal cells of the Malpighian tubules.

Its subcellular location is the cytoplasmic vesicle membrane. It carries out the reaction 3',5'-cyclic GMP(in) + ATP + H2O = 3',5'-cyclic GMP(out) + ADP + phosphate + H(+). The catalysed reaction is guanine(out) + ATP + H2O = guanine(in) + ADP + phosphate + H(+). The enzyme catalyses riboflavin(in) + ATP + H2O = riboflavin(out) + ADP + phosphate + H(+). It catalyses the reaction (6S)-5,6,7,8-tetrahydrofolate(out) + ATP + H2O = (6S)-5,6,7,8-tetrahydrofolate(in) + ADP + phosphate + H(+). It carries out the reaction L-tryptophan(out) + ATP + H2O = L-tryptophan(in) + ADP + phosphate + H(+). The catalysed reaction is L-kynurenine(out) + ATP + H2O = L-kynurenine(in) + ADP + phosphate + H(+). The enzyme catalyses xanthine(out) + ATP + H2O = xanthine(in) + ADP + phosphate + H(+). Its function is as follows. ATP-dependent transporter of the ATP-binding cassette (ABC) family which transports various molecules including bioamines, neurotransmitters, metabolic intermediates and second messengers. In the eye, required for the transport of the eye red and brown pigment precursors, guanine and tryptophan, into pigment cell granules. Probably in association with bw/brown, involved in the transport of guanine. Probably in association with st/scarlet involved in the transport of kynurenine and probably tryptophan. Involved in the transport of kynurenine in pupal eyes. May play a role in histamine uptake by the lamina epithelial glia which surrounds photoreceptors R1-R6. In Malpighian tubules, involved in the transport of cGMP, guanine, xanthine, riboflavin, kynurenine and tryptophan. Probably in association with br/brown, involved in aging-induced intestinal stem cell proliferation in the midgut by regulating tetrahydrofolate transport. Probably in association with st/scarlet, plays a role in zinc storage granule biogenesis in Malpighian tubule principal epithelial cells. This Drosophila melanogaster (Fruit fly) protein is Protein white.